Reading from the N-terminus, the 91-residue chain is Small ribosomal subunit protein uS19 (91 aa).

Belongs to the universal ribosomal protein uS19 family.

Functionally, protein S19 forms a complex with S13 that binds strongly to the 16S ribosomal RNA. This Pseudomonas putida (strain ATCC 700007 / DSM 6899 / JCM 31910 / BCRC 17059 / LMG 24140 / F1) protein is Small ribosomal subunit protein uS19.